Consider the following 89-residue polypeptide: ATP synthase subunit e, mitochondrial (89 aa).

N-acetylserine is present on S1. The chain crosses the membrane as a helical span at residues 8–25 (YSSLAAGIVYGAYHTYTL).

As to quaternary structure, F-type ATP synthases have 2 components, the catalytic core F(1) and the membrane-embedded component F(0), linked together by a central stalk and a peripheral stalk. The central stalk, also called rotor shaft, is often seen as part of F(1). The peripheral stalk is seen as part of F(0). F(0) contains the membrane channel next to the rotor. F-type ATP synthases form dimers but each monomer functions independently in ATP generation. The dimer consists of 18 different polypeptides: ATP1 (subunit alpha, part of F(1), 3 molecules per monomer), ATP2 (subunit beta, part of F(1), 3 molecules per monomer), ATP3 (subunit gamma, part of the central stalk), ATP4 (subunit b, part of the peripheral stalk), ATP5/OSCP (subunit 5/OSCP, part of the peripheral stalk), ATP6 (subunit a, part of the peripheral stalk), ATP7 (subunit d, part of the peripheral stalk), ATP8 (subunit 8, part of the peripheral stalk), OLI1 (subunit c, part of the rotor, 10 molecules per monomer), ATP14 (subunit h, part of the peripheral stalk), ATP15 (subunit epsilon, part of the central stalk), ATP16 (subunit delta, part of the central stalk), ATP17 (subunit f, part of the peripheral stalk), ATP18 (subunit i/j, part of the peripheral stalk). Dimer-specific subunits are ATP19 (subunit k, at interface between monomers), ATP20 (subunit g, at interface between monomers), TIM11 (subunit e, at interface between monomers). Also contains subunit L.

Its subcellular location is the mitochondrion inner membrane. Functionally, mitochondrial membrane ATP synthase (F(1)F(0) ATP synthase or Complex V) produces ATP from ADP in the presence of a proton gradient across the membrane which is generated by electron transport complexes of the respiratory chain. F-type ATP synthases consist of two structural domains, F(1) - containing the extramembraneous catalytic core, and F(0) - containing the membrane proton channel, linked together by a central stalk and a peripheral stalk. During catalysis, ATP synthesis in the catalytic domain of F(1) is coupled via a rotary mechanism of the central stalk subunits to proton translocation. Part of the complex F(0) domain. Minor subunit located with subunit a/ATP6 in the membrane. Together with subunit g/ATP20, probably contributes to membrane curvature at the site of the ATP synthase dimer, ultimately contributing to formation of cristae. The chain is ATP synthase subunit e, mitochondrial from Pichia angusta (Yeast).